The sequence spans 507 residues: Inositol-3-phosphate synthase (507 aa).

Residues Gly70, Gly71, Asn72, Asn73, Asp143, Ile180, Gln190, Arg193, Thr230, Ala231, Asn232, Thr233, Gly281, Ser282, Asp306, Ser309, Asn340, Asn341, Asp342, Lys355, Ala391, Asp419, and Ser420 each coordinate NAD(+).

It belongs to the myo-inositol 1-phosphate synthase family. NAD(+) is required as a cofactor.

It is found in the cytoplasm. The protein resides in the cytosol. Its subcellular location is the nucleus. It carries out the reaction D-glucose 6-phosphate = 1D-myo-inositol 3-phosphate. It participates in polyol metabolism; myo-inositol biosynthesis; myo-inositol from D-glucose 6-phosphate: step 1/2. In terms of biological role, key enzyme in myo-inositol biosynthesis pathway that catalyzes the conversion of glucose 6-phosphate to 1-myo-inositol 1-phosphate in a NAD-dependent manner. This chain is Inositol-3-phosphate synthase, found in Citrus paradisi (Grapefruit).